A 97-amino-acid polypeptide reads, in one-letter code: UPF0223 protein lp_2149 (97 aa).

This sequence belongs to the UPF0223 family.

The sequence is that of UPF0223 protein lp_2149 from Lactiplantibacillus plantarum (strain ATCC BAA-793 / NCIMB 8826 / WCFS1) (Lactobacillus plantarum).